The following is a 432-amino-acid chain: Ribosomal protein uS12 methylthiotransferase RimO (432 aa).

The MTTase N-terminal domain occupies Asn-4 to Lys-122. Cys-13, Cys-51, Cys-85, Cys-146, Cys-150, and Cys-153 together coordinate [4Fe-4S] cluster. The Radical SAM core domain maps to Thr-132–Glu-363. The TRAM domain maps to Gln-366 to Leu-432.

The protein belongs to the methylthiotransferase family. RimO subfamily. It depends on [4Fe-4S] cluster as a cofactor.

The protein localises to the cytoplasm. The enzyme catalyses L-aspartate(89)-[ribosomal protein uS12]-hydrogen + (sulfur carrier)-SH + AH2 + 2 S-adenosyl-L-methionine = 3-methylsulfanyl-L-aspartate(89)-[ribosomal protein uS12]-hydrogen + (sulfur carrier)-H + 5'-deoxyadenosine + L-methionine + A + S-adenosyl-L-homocysteine + 2 H(+). Catalyzes the methylthiolation of an aspartic acid residue of ribosomal protein uS12. The sequence is that of Ribosomal protein uS12 methylthiotransferase RimO from Phocaeicola vulgatus (strain ATCC 8482 / DSM 1447 / JCM 5826 / CCUG 4940 / NBRC 14291 / NCTC 11154) (Bacteroides vulgatus).